A 40-amino-acid chain; its full sequence is IVGGNEVTPHAYPWQVGLFIDDMYFCGGSISVTLTGWGKP.

In terms of domain architecture, Peptidase S1 spans 1-40 (IVGGNEVTPHAYPWQVGLFIDDMYFCGGSISVTLTGWGKP).

This sequence belongs to the peptidase S1 family.

It is found in the secreted. The protein localises to the extracellular space. In terms of biological role, serine protease with fibrinolytic activity. The sequence is that of Fibrinolytic protease from Euphausia superba (Antarctic krill).